The sequence spans 472 residues: Protein nucleotidyltransferase YdiU (472 aa).

ATP-binding residues include Gly-86, Gly-88, Arg-89, Lys-109, Asp-121, Gly-122, Arg-172, and Arg-179. Residue Asp-244 is the Proton acceptor of the active site. Mg(2+) is bound by residues Asn-245 and Asp-254. Position 254 (Asp-254) interacts with ATP.

It belongs to the SELO family. Mg(2+) serves as cofactor. Requires Mn(2+) as cofactor.

It catalyses the reaction L-seryl-[protein] + ATP = 3-O-(5'-adenylyl)-L-seryl-[protein] + diphosphate. The catalysed reaction is L-threonyl-[protein] + ATP = 3-O-(5'-adenylyl)-L-threonyl-[protein] + diphosphate. The enzyme catalyses L-tyrosyl-[protein] + ATP = O-(5'-adenylyl)-L-tyrosyl-[protein] + diphosphate. It carries out the reaction L-histidyl-[protein] + UTP = N(tele)-(5'-uridylyl)-L-histidyl-[protein] + diphosphate. It catalyses the reaction L-seryl-[protein] + UTP = O-(5'-uridylyl)-L-seryl-[protein] + diphosphate. The catalysed reaction is L-tyrosyl-[protein] + UTP = O-(5'-uridylyl)-L-tyrosyl-[protein] + diphosphate. In terms of biological role, nucleotidyltransferase involved in the post-translational modification of proteins. It can catalyze the addition of adenosine monophosphate (AMP) or uridine monophosphate (UMP) to a protein, resulting in modifications known as AMPylation and UMPylation. In Ruegeria sp. (strain TM1040) (Silicibacter sp.), this protein is Protein nucleotidyltransferase YdiU.